The primary structure comprises 177 residues: Adenine phosphoribosyltransferase (177 aa).

The protein belongs to the purine/pyrimidine phosphoribosyltransferase family. Homodimer.

It localises to the cytoplasm. It catalyses the reaction AMP + diphosphate = 5-phospho-alpha-D-ribose 1-diphosphate + adenine. The protein operates within purine metabolism; AMP biosynthesis via salvage pathway; AMP from adenine: step 1/1. Catalyzes a salvage reaction resulting in the formation of AMP, that is energically less costly than de novo synthesis. In Mycobacteroides abscessus (strain ATCC 19977 / DSM 44196 / CCUG 20993 / CIP 104536 / JCM 13569 / NCTC 13031 / TMC 1543 / L948) (Mycobacterium abscessus), this protein is Adenine phosphoribosyltransferase.